The chain runs to 366 residues: Anhydro-N-acetylmuramic acid kinase (366 aa).

12 to 19 (GTSLDGID) serves as a coordination point for ATP.

The protein belongs to the anhydro-N-acetylmuramic acid kinase family.

It carries out the reaction 1,6-anhydro-N-acetyl-beta-muramate + ATP + H2O = N-acetyl-D-muramate 6-phosphate + ADP + H(+). Its pathway is amino-sugar metabolism; 1,6-anhydro-N-acetylmuramate degradation. It functions in the pathway cell wall biogenesis; peptidoglycan recycling. Its function is as follows. Catalyzes the specific phosphorylation of 1,6-anhydro-N-acetylmuramic acid (anhMurNAc) with the simultaneous cleavage of the 1,6-anhydro ring, generating MurNAc-6-P. Is required for the utilization of anhMurNAc either imported from the medium or derived from its own cell wall murein, and thus plays a role in cell wall recycling. This Nitrosospira multiformis (strain ATCC 25196 / NCIMB 11849 / C 71) protein is Anhydro-N-acetylmuramic acid kinase.